A 386-amino-acid polypeptide reads, in one-letter code: Phosphoglycerate kinase (386 aa).

Substrate is bound by residues Asp-21–Asn-23, Arg-36, His-59–Arg-62, Arg-113, and Arg-146. ATP is bound by residues Lys-197, Glu-314, and Gly-340–Thr-343.

It belongs to the phosphoglycerate kinase family. Monomer.

The protein resides in the cytoplasm. It carries out the reaction (2R)-3-phosphoglycerate + ATP = (2R)-3-phospho-glyceroyl phosphate + ADP. It functions in the pathway carbohydrate degradation; glycolysis; pyruvate from D-glyceraldehyde 3-phosphate: step 2/5. The protein is Phosphoglycerate kinase of Ectopseudomonas mendocina (strain ymp) (Pseudomonas mendocina).